We begin with the raw amino-acid sequence, 185 residues long: Large ribosomal subunit protein uL22 (185 aa).

The interval valine 157–aspartate 185 is disordered. Over residues lysine 169–arginine 178 the composition is skewed to basic residues.

The protein belongs to the universal ribosomal protein uL22 family.

The sequence is that of Large ribosomal subunit protein uL22 (RpL17) from Argas monolakensis (Mono lake bird tick).